The primary structure comprises 471 residues: 3-isopropylmalate dehydratase large subunit (471 aa).

Residues cysteine 347, cysteine 407, and cysteine 410 each contribute to the [4Fe-4S] cluster site.

Belongs to the aconitase/IPM isomerase family. LeuC type 1 subfamily. In terms of assembly, heterodimer of LeuC and LeuD. [4Fe-4S] cluster serves as cofactor.

The catalysed reaction is (2R,3S)-3-isopropylmalate = (2S)-2-isopropylmalate. Its pathway is amino-acid biosynthesis; L-leucine biosynthesis; L-leucine from 3-methyl-2-oxobutanoate: step 2/4. Catalyzes the isomerization between 2-isopropylmalate and 3-isopropylmalate, via the formation of 2-isopropylmaleate. In Buchnera aphidicola subsp. Baizongia pistaciae (strain Bp), this protein is 3-isopropylmalate dehydratase large subunit.